Here is a 212-residue protein sequence, read N- to C-terminus: MHEPRAVVVVHRDVWAYQQAWEQQLAWVQAIHEGQRQDTLILLEHMPVYTLGKRATRADVLRQDIPAVYTDRGGQVTYHGPGQLVVYVLWNLRGQLHGVRAHVARLEEMVMEVLAHYGVVGQRDGAGPGIWVGDAKIASIGVRVTQGVTLHGLSLNRDPDLSHFQGIIPCGQVGRPVTSLAALGVAVSRQALEQRMVEAFERQFNARCWEAS.

Positions 34–208 (GQRQDTLILL…AFERQFNARC (175 aa)) constitute a BPL/LPL catalytic domain. Substrate-binding positions include 72-79 (RGGQVTYH), 139-141 (SIG), and 152-154 (GLS). The active-site Acyl-thioester intermediate is the Cys170.

This sequence belongs to the LipB family.

It is found in the cytoplasm. The enzyme catalyses octanoyl-[ACP] + L-lysyl-[protein] = N(6)-octanoyl-L-lysyl-[protein] + holo-[ACP] + H(+). The protein operates within protein modification; protein lipoylation via endogenous pathway; protein N(6)-(lipoyl)lysine from octanoyl-[acyl-carrier-protein]: step 1/2. In terms of biological role, catalyzes the transfer of endogenously produced octanoic acid from octanoyl-acyl-carrier-protein onto the lipoyl domains of lipoate-dependent enzymes. Lipoyl-ACP can also act as a substrate although octanoyl-ACP is likely to be the physiological substrate. The protein is Octanoyltransferase of Magnetococcus marinus (strain ATCC BAA-1437 / JCM 17883 / MC-1).